The primary structure comprises 198 residues: Acireductone dioxygenase 2 (198 aa).

Histidine 99, histidine 101, glutamate 105, and histidine 144 together coordinate Fe(2+). Residues histidine 99, histidine 101, glutamate 105, and histidine 144 each coordinate Ni(2+).

Belongs to the acireductone dioxygenase (ARD) family. It depends on Fe(2+) as a cofactor. Ni(2+) serves as cofactor. As to expression, ubiquitous.

It localises to the cytoplasm. The protein localises to the nucleus. The catalysed reaction is 1,2-dihydroxy-5-(methylsulfanyl)pent-1-en-3-one + O2 = 4-methylsulfanyl-2-oxobutanoate + formate + 2 H(+). It carries out the reaction 1,2-dihydroxy-5-(methylsulfanyl)pent-1-en-3-one + O2 = 3-(methylsulfanyl)propanoate + CO + formate + 2 H(+). It participates in amino-acid biosynthesis; L-methionine biosynthesis via salvage pathway; L-methionine from S-methyl-5-thio-alpha-D-ribose 1-phosphate: step 5/6. Its function is as follows. Catalyzes 2 different reactions between oxygen and the acireductone 1,2-dihydroxy-3-keto-5-methylthiopentene (DHK-MTPene) depending upon the metal bound in the active site. Fe-containing acireductone dioxygenase (Fe-ARD) produces formate and 2-keto-4-methylthiobutyrate (KMTB), the alpha-ketoacid precursor of methionine in the methionine recycle pathway. Ni-containing acireductone dioxygenase (Ni-ARD) produces methylthiopropionate, carbon monoxide and formate, and does not lie on the methionine recycle pathway. This chain is Acireductone dioxygenase 2 (ARD2), found in Oryza sativa subsp. indica (Rice).